The primary structure comprises 307 residues: Probable RuBisCO transcriptional regulator (307 aa).

An HTH lysR-type domain is found at 4–61 (FTLQQLRILKAVATEKNFTKAAELLYLSQPSLSKQIKTLEKNLDILLVNRENNKISLT). The segment at residues 21 to 40 (FTKAAELLYLSQPSLSKQIK) is a DNA-binding region (H-T-H motif).

The protein belongs to the LysR transcriptional regulatory family.

The protein localises to the plastid. Its subcellular location is the chloroplast. Trans-acting transcriptional regulator of RuBisCO genes (rbcL and rbcS) expression. The polypeptide is Probable RuBisCO transcriptional regulator (rbcR) (Phaeodactylum tricornutum (strain CCAP 1055/1)).